Consider the following 246-residue polypeptide: uncharacterized protein (246 aa).

2 stretches are compositionally biased toward basic residues: residues 1-10 (MVWRFQKHIG) and 79-97 (TRRRGAGQRHCNQKPKAGR). The interval 1–184 (MVWRFQKHIG…LPPAHVPPTL (184 aa)) is disordered. A compositionally biased stretch (pro residues) spans 158–180 (PPFPPPPPPGDPTPPSPLPPAHV).

This is an uncharacterized protein from Homo sapiens (Human).